A 638-amino-acid polypeptide reads, in one-letter code: Threonine--tRNA ligase (638 aa).

Positions 1 to 61 (MPIITLPDGT…DYDAEIKIIT (61 aa)) constitute a TGS domain. The tract at residues 242–533 (DHRKIGKKMD…LIENYAGNFP (292 aa)) is catalytic. Residues Cys-333, His-384, and His-510 each contribute to the Zn(2+) site.

Belongs to the class-II aminoacyl-tRNA synthetase family. In terms of assembly, homodimer. Zn(2+) is required as a cofactor.

It is found in the cytoplasm. It carries out the reaction tRNA(Thr) + L-threonine + ATP = L-threonyl-tRNA(Thr) + AMP + diphosphate + H(+). Catalyzes the attachment of threonine to tRNA(Thr) in a two-step reaction: L-threonine is first activated by ATP to form Thr-AMP and then transferred to the acceptor end of tRNA(Thr). Also edits incorrectly charged L-seryl-tRNA(Thr). This Prochlorococcus marinus (strain MIT 9211) protein is Threonine--tRNA ligase.